We begin with the raw amino-acid sequence, 217 residues long: Cytidylate kinase (217 aa).

Position 10-18 (10-18) interacts with ATP; that stretch reads GPAGAGKST.

The protein belongs to the cytidylate kinase family. Type 1 subfamily.

The protein resides in the cytoplasm. The catalysed reaction is CMP + ATP = CDP + ADP. It carries out the reaction dCMP + ATP = dCDP + ADP. In Clostridium botulinum (strain Loch Maree / Type A3), this protein is Cytidylate kinase.